Consider the following 83-residue polypeptide: Cytotoxin homolog 5 (83 aa).

A signal peptide spans 1–21; that stretch reads MKTLLLTMVVVTIVCLDLGYT. 4 disulfide bridges follow: cysteine 24-cysteine 43, cysteine 36-cysteine 61, cysteine 65-cysteine 76, and cysteine 77-cysteine 82.

It belongs to the three-finger toxin family. Short-chain subfamily. Orphan group XV sub-subfamily. Expressed by the venom gland.

Its subcellular location is the secreted. It is found in the target cell membrane. Has low cytotoxic activity. This is Cytotoxin homolog 5 from Naja atra (Chinese cobra).